The chain runs to 205 residues: uncharacterized protein (205 aa).

This is an uncharacterized protein from Saccharomyces cerevisiae (strain ATCC 204508 / S288c) (Baker's yeast).